We begin with the raw amino-acid sequence, 71 residues long: MPHVRVKENEPFEVALRRFKRTCEKAGVLTEVRRREFYEKPTEIRKRKAAAAVKRQAKRVSKEVARRERLY.

The protein belongs to the bacterial ribosomal protein bS21 family.

The polypeptide is Small ribosomal subunit protein bS21 (Thioalkalivibrio sulfidiphilus (strain HL-EbGR7)).